The chain runs to 329 residues: Serine dehydratase-like (329 aa).

Met1 bears the N-acetylmethionine mark. Residue Lys48 is modified to N6-(pyridoxal phosphate)lysine.

The protein belongs to the serine/threonine dehydratase family. As to quaternary structure, monomer. Homodimer. The cofactor is pyridoxal 5'-phosphate. In terms of tissue distribution, abundantly expressed in liver.

It catalyses the reaction L-serine = pyruvate + NH4(+). The enzyme catalyses L-threonine = 2-oxobutanoate + NH4(+). It carries out the reaction L-glutamate = D-glutamate. Catalyzes the pyridoxal-phosphate-dependent dehydrative deamination of L-threonine and L-serine to ammonia and alpha-ketobutyrate and pyruvate, respectively. Also exhibits racemase activity towards L-glutamate and D-glutamate. This Mus musculus (Mouse) protein is Serine dehydratase-like (Sdsl).